Here is a 197-residue protein sequence, read N- to C-terminus: Na(+)-translocating NADH-quinone reductase subunit E (197 aa).

The next 6 helical transmembrane spans lie at Ser-11–Val-31, Val-35–Val-55, Phe-76–Phe-96, Leu-108–Met-128, Val-139–Ile-159, and Leu-175–Ile-195.

This sequence belongs to the NqrDE/RnfAE family. Composed of six subunits; NqrA, NqrB, NqrC, NqrD, NqrE and NqrF.

The protein resides in the cell inner membrane. The enzyme catalyses a ubiquinone + n Na(+)(in) + NADH + H(+) = a ubiquinol + n Na(+)(out) + NAD(+). In terms of biological role, NQR complex catalyzes the reduction of ubiquinone-1 to ubiquinol by two successive reactions, coupled with the transport of Na(+) ions from the cytoplasm to the periplasm. NqrA to NqrE are probably involved in the second step, the conversion of ubisemiquinone to ubiquinol. In Neisseria meningitidis serogroup B (strain ATCC BAA-335 / MC58), this protein is Na(+)-translocating NADH-quinone reductase subunit E.